The primary structure comprises 233 residues: MRKHLLDHLKTRKILGARIAKGEKTEQDLINLNMAPQVFMFKNLFSGQVLYSQVPAFHQDQIDEQFTRPNWENRKPSRRNDLWRIMCVANFENYEYAIAAYKGLVQLRQVRDVVQKKEAKALRKKNDEGNVWFSGQYRPTYSQEAVADLSHVIDEFELEGTSVMWESLWRKGEDTHWRSDLVEHDTLPPFNPRDQTILLDELRAKAVEEFANLRQQAQQSEQQSQSELESQTA.

Residues 214 to 233 are disordered; the sequence is RQQAQQSEQQSQSELESQTA. The span at 215–233 shows a compositional bias: low complexity; the sequence is QQAQQSEQQSQSELESQTA.

It belongs to the mitochondrion-specific ribosomal protein mL67 family.

It localises to the nucleus. Its subcellular location is the mitochondrion. In terms of biological role, transcription factor involved in regulation of RNA polymerase II-dependent transcription. Also involved in regulation of mitochondrial DNA recombination, maintenance and repair, and generation of homoplasmic cells. This chain is Large ribosomal subunit protein mL67 (MHR1), found in Debaryomyces hansenii (strain ATCC 36239 / CBS 767 / BCRC 21394 / JCM 1990 / NBRC 0083 / IGC 2968) (Yeast).